The sequence spans 171 residues: UPF0398 protein MGAS9429_Spy1349 (171 aa).

The protein belongs to the UPF0398 family.

In Streptococcus pyogenes serotype M12 (strain MGAS9429), this protein is UPF0398 protein MGAS9429_Spy1349.